Here is a 477-residue protein sequence, read N- to C-terminus: MIKPRTPPGIMELLPREQIAFQRMLDVIRRNYERFGFLPVETPVFELSDVLLTKSGGETERQVYFVQSTGALANAAAAADEGAESGGLPELALRFDLTVPLARYVAEHEHELSFPFRRYQMQRVYRGERAQRGRFREFYQCDIDVIGKDALSIRYDAEVLAVIHAVFAELGIGDFKVQLNNRKLLRGFFESLGVAEGELQLAVLREVDKIDKRGAEYVRDTLTGEGFGIATAQVDKILAFVAVRSNGHADALAQLQALEASVGASATLGEGIAELREVLELVKALGVPETAYCLNFSIARGLDYYTGTVYETTLTDHPQIGSICSGGRYENLASHYTKSKLPGVGISIGLTRLFWQLREAGLIAGIAESSVHAMVALMDESRLDDALDIARRLRIGGINTEVQMEPKKVGKQFQYAARAGIRFVVLAGDDELARGVVAVKDLVREQQFDVARDELASTLQVELEQAKAMLVSGIAAN.

The protein belongs to the class-II aminoacyl-tRNA synthetase family. As to quaternary structure, homodimer.

It localises to the cytoplasm. The catalysed reaction is tRNA(His) + L-histidine + ATP = L-histidyl-tRNA(His) + AMP + diphosphate + H(+). The protein is Histidine--tRNA ligase of Xanthomonas campestris pv. campestris (strain 8004).